Here is a 227-residue protein sequence, read N- to C-terminus: Phosphoribosylformylglycinamidine synthase subunit PurQ (227 aa).

Residues 3-225 enclose the Glutamine amidotransferase type-1 domain; sequence FAVIVLPGSN…VKNWRDTHVT (223 aa). The active-site Nucleophile is Cys86. Catalysis depends on residues His194 and Glu196.

As to quaternary structure, part of the FGAM synthase complex composed of 1 PurL, 1 PurQ and 2 PurS subunits.

The protein localises to the cytoplasm. It carries out the reaction N(2)-formyl-N(1)-(5-phospho-beta-D-ribosyl)glycinamide + L-glutamine + ATP + H2O = 2-formamido-N(1)-(5-O-phospho-beta-D-ribosyl)acetamidine + L-glutamate + ADP + phosphate + H(+). The catalysed reaction is L-glutamine + H2O = L-glutamate + NH4(+). It functions in the pathway purine metabolism; IMP biosynthesis via de novo pathway; 5-amino-1-(5-phospho-D-ribosyl)imidazole from N(2)-formyl-N(1)-(5-phospho-D-ribosyl)glycinamide: step 1/2. In terms of biological role, part of the phosphoribosylformylglycinamidine synthase complex involved in the purines biosynthetic pathway. Catalyzes the ATP-dependent conversion of formylglycinamide ribonucleotide (FGAR) and glutamine to yield formylglycinamidine ribonucleotide (FGAM) and glutamate. The FGAM synthase complex is composed of three subunits. PurQ produces an ammonia molecule by converting glutamine to glutamate. PurL transfers the ammonia molecule to FGAR to form FGAM in an ATP-dependent manner. PurS interacts with PurQ and PurL and is thought to assist in the transfer of the ammonia molecule from PurQ to PurL. In Bacillus pumilus (strain SAFR-032), this protein is Phosphoribosylformylglycinamidine synthase subunit PurQ.